The sequence spans 233 residues: Pirin-like protein YhaK (233 aa).

It belongs to the pirin family. As to quaternary structure, monomer.

The protein localises to the cytoplasm. Does not have quercetin 2,3-dioxygenase activity. The protein is Pirin-like protein YhaK (yhaK) of Escherichia coli (strain K12).